The primary structure comprises 201 residues: uncharacterized protein (201 aa).

The N-terminal stretch at 1-23 (MKILYFIFVIIINILLILNHVKS) is a signal peptide. Residues 24 to 178 (KYNTFIFENT…GNYGEDPQRN (155 aa)) lie on the Extracellular side of the membrane. Asn-114 and Asn-134 each carry an N-linked (GlcNAc...) asparagine glycan. The tract at residues 122–157 (TPETPSPTENAPNTSGGSSEGNHYTYKSSSSSSEHI) is disordered. Over residues 123 to 148 (PETPSPTENAPNTSGGSSEGNHYTYK) the composition is skewed to polar residues. A helical membrane pass occupies residues 179-199 (IGISLSSSLIFISILFLIIFI). Residues 200 to 201 (NN) are Cytoplasmic-facing.

It localises to the membrane. This is an uncharacterized protein from Dictyostelium discoideum (Social amoeba).